The following is a 432-amino-acid chain: Tryptophan--tRNA ligase, cytoplasmic (432 aa).

A 'HIGH' region motif is present at residues 111–120 (PSSDSMHLGH). Residues 295–299 (KMSAS) carry the 'KMSKS' region motif.

It belongs to the class-I aminoacyl-tRNA synthetase family. In terms of assembly, homodimer.

The protein resides in the cytoplasm. It carries out the reaction tRNA(Trp) + L-tryptophan + ATP = L-tryptophyl-tRNA(Trp) + AMP + diphosphate + H(+). This chain is Tryptophan--tRNA ligase, cytoplasmic (WRS1), found in Saccharomyces cerevisiae (strain ATCC 204508 / S288c) (Baker's yeast).